The following is a 496-amino-acid chain: Probable malate:quinone oxidoreductase (496 aa).

This sequence belongs to the MQO family. It depends on FAD as a cofactor.

It catalyses the reaction (S)-malate + a quinone = a quinol + oxaloacetate. It functions in the pathway carbohydrate metabolism; tricarboxylic acid cycle; oxaloacetate from (S)-malate (quinone route): step 1/1. The polypeptide is Probable malate:quinone oxidoreductase (Prochlorococcus marinus (strain MIT 9303)).